The chain runs to 135 residues: Small ribosomal subunit protein uS9 (135 aa).

This sequence belongs to the universal ribosomal protein uS9 family.

The sequence is that of Small ribosomal subunit protein uS9 from Petrotoga mobilis (strain DSM 10674 / SJ95).